Consider the following 644-residue polypeptide: Exoribonuclease 2 (644 aa).

Residues 189–516 (REDLTSLDFV…NHRLLKAVIK (328 aa)) form the RNB domain. One can recognise an S1 motif domain in the interval 561 to 643 (GTRFAAEIVD…ETRSIIARPV (83 aa)).

The protein belongs to the RNR ribonuclease family. RNase II subfamily.

Its subcellular location is the cytoplasm. The catalysed reaction is Exonucleolytic cleavage in the 3'- to 5'-direction to yield nucleoside 5'-phosphates.. Its function is as follows. Involved in mRNA degradation. Hydrolyzes single-stranded polyribonucleotides processively in the 3' to 5' direction. This Shigella flexneri protein is Exoribonuclease 2.